Reading from the N-terminus, the 599-residue chain is Aspartate--tRNA(Asp/Asn) ligase (599 aa).

Residue E174 coordinates L-aspartate. The interval Q198 to K201 is aspartate. R220 provides a ligand contact to L-aspartate. ATP contacts are provided by residues R220 to E222 and Q229. H457 is an L-aspartate binding site. E491 contributes to the ATP binding site. R498 contributes to the L-aspartate binding site. G543–R546 contributes to the ATP binding site.

Belongs to the class-II aminoacyl-tRNA synthetase family. Type 1 subfamily. In terms of assembly, homodimer.

It is found in the cytoplasm. It catalyses the reaction tRNA(Asx) + L-aspartate + ATP = L-aspartyl-tRNA(Asx) + AMP + diphosphate. Functionally, aspartyl-tRNA synthetase with relaxed tRNA specificity since it is able to aspartylate not only its cognate tRNA(Asp) but also tRNA(Asn). Reaction proceeds in two steps: L-aspartate is first activated by ATP to form Asp-AMP and then transferred to the acceptor end of tRNA(Asp/Asn). The protein is Aspartate--tRNA(Asp/Asn) ligase of Paraburkholderia phytofirmans (strain DSM 17436 / LMG 22146 / PsJN) (Burkholderia phytofirmans).